The primary structure comprises 596 residues: Putative terpene synthase 3, chloroplastic (596 aa).

The N-terminal 46 residues, 1–46, are a transit peptide targeting the chloroplast; the sequence is MATLSMQVSTLSKQVKNLNTFGMGSASKLPMVARRVSTIRLRPICS. Mn(2+) is bound by residues Asp349 and Asp353. The DDXXD motif motif lies at 349–353; it reads DDVYD. Homodimerization stretches follow at residues 355 to 361 and 427 to 464; these read YGTLDEL and EAKW…FTLP. Mn(2+)-binding residues include Asp493 and Glu501.

It belongs to the terpene synthase family. In terms of assembly, homodimer. Mn(2+) serves as cofactor. The cofactor is Mg(2+).

It is found in the plastid. Its subcellular location is the chloroplast. It functions in the pathway secondary metabolite biosynthesis; terpenoid biosynthesis. Its function is as follows. Putative monoterpene synthase. The polypeptide is Putative terpene synthase 3, chloroplastic (Thymus vulgaris (Thyme)).